Consider the following 222-residue polypeptide: N-(5'-phosphoribosyl)anthranilate isomerase (222 aa).

It belongs to the TrpF family.

It carries out the reaction N-(5-phospho-beta-D-ribosyl)anthranilate = 1-(2-carboxyphenylamino)-1-deoxy-D-ribulose 5-phosphate. Its pathway is amino-acid biosynthesis; L-tryptophan biosynthesis; L-tryptophan from chorismate: step 3/5. The sequence is that of N-(5'-phosphoribosyl)anthranilate isomerase from Brucella abortus (strain S19).